We begin with the raw amino-acid sequence, 460 residues long: GTPase Der (460 aa).

EngA-type G domains lie at 3–167 (FTFA…PEPD) and 189–364 (IRVA…ATWN). Residues 9–16 (GRPNVGKS), 56–60 (DTAGL), 119–122 (NKSE), 195–202 (GRPNAGKS), 242–246 (DTAGL), and 307–310 (NKWD) each bind GTP. The 85-residue stretch at 365–449 (RRVPTAALNR…PVRIMLREKA (85 aa)) folds into the KH-like domain.

Belongs to the TRAFAC class TrmE-Era-EngA-EngB-Septin-like GTPase superfamily. EngA (Der) GTPase family. In terms of assembly, associates with the 50S ribosomal subunit.

GTPase that plays an essential role in the late steps of ribosome biogenesis. In Rhodopseudomonas palustris (strain BisA53), this protein is GTPase Der.